Here is a 152-residue protein sequence, read N- to C-terminus: D-aminoacyl-tRNA deacylase (152 aa).

The short motif at 142–143 is the Gly-cisPro motif, important for rejection of L-amino acids element; the sequence is GP.

Belongs to the DTD family. As to quaternary structure, homodimer.

Its subcellular location is the cytoplasm. It catalyses the reaction glycyl-tRNA(Ala) + H2O = tRNA(Ala) + glycine + H(+). The enzyme catalyses a D-aminoacyl-tRNA + H2O = a tRNA + a D-alpha-amino acid + H(+). Its function is as follows. An aminoacyl-tRNA editing enzyme that deacylates mischarged D-aminoacyl-tRNAs. Also deacylates mischarged glycyl-tRNA(Ala), protecting cells against glycine mischarging by AlaRS. Acts via tRNA-based rather than protein-based catalysis; rejects L-amino acids rather than detecting D-amino acids in the active site. By recycling D-aminoacyl-tRNA to D-amino acids and free tRNA molecules, this enzyme counteracts the toxicity associated with the formation of D-aminoacyl-tRNA entities in vivo and helps enforce protein L-homochirality. The polypeptide is D-aminoacyl-tRNA deacylase (Burkholderia cenocepacia (strain HI2424)).